The sequence spans 95 residues: MLHTLSCSPYHADLDTLLRSLEQGDALVLLQDGVIAALVGGDIIHRLLDSAVLLYALRPDTEARGMTEQISNSVVLIGYNEFVQLTVEHPQQLAW.

It belongs to the DsrH/TusB family. Heterohexamer, formed by a dimer of trimers. The hexameric TusBCD complex contains 2 copies each of TusB, TusC and TusD. The TusBCD complex interacts with TusE.

It localises to the cytoplasm. Functionally, part of a sulfur-relay system required for 2-thiolation of 5-methylaminomethyl-2-thiouridine (mnm(5)s(2)U) at tRNA wobble positions. The polypeptide is Protein TusB (Pectobacterium atrosepticum (strain SCRI 1043 / ATCC BAA-672) (Erwinia carotovora subsp. atroseptica)).